The chain runs to 393 residues: Stimulated by retinoic acid gene 8 protein (393 aa).

Polar residues predominate over residues 1 to 11; sequence MATPGEGNQPS. The segment at 1-25 is disordered; sequence MATPGEGNQPSDDGAPQPLAQLQKL. The short motif at 28–33 is the Nuclear localization signal (NLS) element; sequence RVVRRR. Residues 66–95 adopt a coiled-coil conformation; it reads QVLNRTKIHIQEQEESLDKLLKLKASFNLQ. The tract at residues 124–201 is disordered; that stretch reads FLQDSPPEWF…EEKKVDLSHS (78 aa). Over residues 141–192 the composition is skewed to acidic residues; sequence DAEEEGEEEGEEEGEEGEEEEEGDEEGEEEEENGEEREVEEYQEEEEEEEEE. The Nuclear export signal (NES) signature appears at 209–218; sequence LMEFERYLNF.

As to quaternary structure, interacts with XPO1. Interacts with MEIOSIN. Post-translationally, phosphorylated in P19 EC cells. Expressed exclusively in premeiotic germ cells in both sexes. In females, is expressed in the embryonic ovary. In males, is expressed in pubertal and adult testes, in premeiotic spermatogenic cells. Expressed by some type A and B spermatogonia, preleptotene spermatocytes, and early leptotene spermatocytes (at protein level). Expression begins in late undifferentiated spermatogonia and persists during differentiating spermatogonia (at protein level).

Its subcellular location is the cytoplasm. The protein resides in the nucleus. In terms of biological role, meiosis-inducer required for the transition into meiosis for both female and male germ cells. In female germ cells, acts downstream of ZGLP1 as a key effector of the meiotic program: required for premeiotic DNA replication and subsequent events in meiotic prophase. During spermatogenesis, next to its role in meiotic initiation, promotes (but is not required for) spermatogonial differentiation. In complex with MEIOSIN, directly activates the transcription of a subset of critical meiotic genes playing a central role in cell-cycle switching from mitosis to meiosis. The chain is Stimulated by retinoic acid gene 8 protein from Mus musculus (Mouse).